The following is a 389-amino-acid chain: Cellobiose 2-epimerase (389 aa).

The protein belongs to the cellobiose 2-epimerase family.

It carries out the reaction D-cellobiose = beta-D-glucosyl-(1-&gt;4)-D-mannopyranose. Functionally, catalyzes the reversible epimerization of cellobiose to 4-O-beta-D-glucopyranosyl-D-mannose (Glc-Man). This chain is Cellobiose 2-epimerase, found in Ruminococcus albus (strain ATCC 27210 / DSM 20455 / JCM 14654 / NCDO 2250 / 7).